Reading from the N-terminus, the 399-residue chain is uncharacterized protein (399 aa).

8 WD repeats span residues 59–99 (EHKD…QICQ), 102–141 (GHKD…EFIT), 144–185 (ETVD…QVMY), 187–227 (HTAP…PECR), 241–280 (ETAA…ILAS), 283–322 (AQTE…FRKS), 324–363 (PHEQ…LLGE), and 366–399 (GHQE…DCEH).

The protein localises to the cytoplasm. It is found in the nucleus. This is an uncharacterized protein from Schizosaccharomyces pombe (strain 972 / ATCC 24843) (Fission yeast).